The following is a 432-amino-acid chain: Glutamyl-tRNA reductase (432 aa).

Substrate contacts are provided by residues T55–R58, S114, E119–Q121, and Q125. The active-site Nucleophile is C56. NADP(+) is bound at residue G194–I199.

This sequence belongs to the glutamyl-tRNA reductase family. Homodimer.

It catalyses the reaction (S)-4-amino-5-oxopentanoate + tRNA(Glu) + NADP(+) = L-glutamyl-tRNA(Glu) + NADPH + H(+). It participates in porphyrin-containing compound metabolism; protoporphyrin-IX biosynthesis; 5-aminolevulinate from L-glutamyl-tRNA(Glu): step 1/2. In terms of biological role, catalyzes the NADPH-dependent reduction of glutamyl-tRNA(Glu) to glutamate 1-semialdehyde (GSA). The chain is Glutamyl-tRNA reductase from Burkholderia thailandensis (strain ATCC 700388 / DSM 13276 / CCUG 48851 / CIP 106301 / E264).